A 216-amino-acid polypeptide reads, in one-letter code: DNA gyrase subunit B (216 aa).

The Toprim domain maps to 140 to 216 (SELYLVEGDS…PDKLRYHKII (77 aa)).

The protein belongs to the type II topoisomerase GyrB family. Heterotetramer, composed of two GyrA and two GyrB chains. In the heterotetramer, GyrA contains the active site tyrosine that forms a transient covalent intermediate with DNA, while GyrB binds cofactors and catalyzes ATP hydrolysis.

It is found in the cytoplasm. It carries out the reaction ATP-dependent breakage, passage and rejoining of double-stranded DNA.. A type II topoisomerase that negatively supercoils closed circular double-stranded (ds) DNA in an ATP-dependent manner to modulate DNA topology and maintain chromosomes in an underwound state. Negative supercoiling favors strand separation, and DNA replication, transcription, recombination and repair, all of which involve strand separation. Also able to catalyze the interconversion of other topological isomers of dsDNA rings, including catenanes and knotted rings. Type II topoisomerases break and join 2 DNA strands simultaneously in an ATP-dependent manner. The sequence is that of DNA gyrase subunit B (gyrB) from Acinetobacter sp. (strain T4).